A 61-amino-acid chain; its full sequence is MDLKLLDILACPICKGPLQLSEDKTELISKGAGVAYPIRDGIPVMLESEARTLTTDERLDK.

This sequence belongs to the UPF0434 family.

This is UPF0434 protein Pmen_1615 from Ectopseudomonas mendocina (strain ymp) (Pseudomonas mendocina).